Here is a 303-residue protein sequence, read N- to C-terminus: Probable 5-dehydro-4-deoxyglucarate dehydratase (303 aa).

This sequence belongs to the DapA family.

The enzyme catalyses 5-dehydro-4-deoxy-D-glucarate + H(+) = 2,5-dioxopentanoate + CO2 + H2O. Its pathway is carbohydrate acid metabolism; D-glucarate degradation; 2,5-dioxopentanoate from D-glucarate: step 2/2. The protein is Probable 5-dehydro-4-deoxyglucarate dehydratase of Paracidovorax citrulli (strain AAC00-1) (Acidovorax citrulli).